Reading from the N-terminus, the 509-residue chain is Anaerobic nitric oxide reductase flavorubredoxin (509 aa).

The zinc metallo-hydrolase stretch occupies residues 30–210; sequence LQGSSYNSYL…PFSRLVTAKI (181 aa). Residues His79, Glu81, Asp83, His147, Asp166, and His227 each contribute to the Fe cation site. A Flavodoxin-like domain is found at 254 to 393; it reads ITLFYDTMSN…VCREHGREIA (140 aa). Residues 260-264 and 342-369 contribute to the FMN site; these read TMSNN and AFGS…ETTL. In terms of domain architecture, Rubredoxin-like spans 457–508; that stretch reads SGCMQCSVCQWIYDPALGEPMQDVTPGTMWSDVPDSFLCPECGLGKDVFNPI. Fe cation-binding residues include Cys462, Cys465, Cys495, and Cys498.

It in the N-terminal section; belongs to the zinc metallo-hydrolase group 3 family. As to quaternary structure, homotetramer. Fe cation serves as cofactor. Requires FMN as cofactor.

It is found in the cytoplasm. It participates in nitrogen metabolism; nitric oxide reduction. Anaerobic nitric oxide reductase; uses NADH to detoxify nitric oxide (NO), protecting several 4Fe-4S NO-sensitive enzymes. Has at least 2 reductase partners, only one of which (NorW, flavorubredoxin reductase) has been identified. NO probably binds to the di-iron center; electrons enter from the NorW at rubredoxin and are transferred sequentially to the FMN center and the di-iron center. Also able to function as an aerobic oxygen reductase. This is Anaerobic nitric oxide reductase flavorubredoxin from Pectobacterium atrosepticum (strain SCRI 1043 / ATCC BAA-672) (Erwinia carotovora subsp. atroseptica).